We begin with the raw amino-acid sequence, 367 residues long: Cobalt-precorrin-5B C(1)-methyltransferase (367 aa).

It belongs to the CbiD family.

The enzyme catalyses Co-precorrin-5B + S-adenosyl-L-methionine = Co-precorrin-6A + S-adenosyl-L-homocysteine. It participates in cofactor biosynthesis; adenosylcobalamin biosynthesis; cob(II)yrinate a,c-diamide from sirohydrochlorin (anaerobic route): step 6/10. Catalyzes the methylation of C-1 in cobalt-precorrin-5B to form cobalt-precorrin-6A. In Leptospira interrogans serogroup Icterohaemorrhagiae serovar Lai (strain 56601), this protein is Cobalt-precorrin-5B C(1)-methyltransferase.